A 359-amino-acid chain; its full sequence is 3-dehydroquinate synthase (359 aa).

NAD(+) contacts are provided by residues 71–76 (DGEAYK), 105–109 (GVIGD), 129–130 (TT), K142, and K151. Residues E184, H247, and H264 each contribute to the Zn(2+) site.

The protein belongs to the sugar phosphate cyclases superfamily. Dehydroquinate synthase family. Requires Co(2+) as cofactor. Zn(2+) is required as a cofactor. It depends on NAD(+) as a cofactor.

It is found in the cytoplasm. The enzyme catalyses 7-phospho-2-dehydro-3-deoxy-D-arabino-heptonate = 3-dehydroquinate + phosphate. Its pathway is metabolic intermediate biosynthesis; chorismate biosynthesis; chorismate from D-erythrose 4-phosphate and phosphoenolpyruvate: step 2/7. In terms of biological role, catalyzes the conversion of 3-deoxy-D-arabino-heptulosonate 7-phosphate (DAHP) to dehydroquinate (DHQ). This Burkholderia ambifaria (strain MC40-6) protein is 3-dehydroquinate synthase.